A 427-amino-acid chain; its full sequence is Trigger factor (427 aa).

The PPIase FKBP-type domain occupies 160–240 (TDTVIGDVVK…VKEVKRLELP (81 aa)).

This sequence belongs to the FKBP-type PPIase family. Tig subfamily.

The protein resides in the cytoplasm. It carries out the reaction [protein]-peptidylproline (omega=180) = [protein]-peptidylproline (omega=0). In terms of biological role, involved in protein export. Acts as a chaperone by maintaining the newly synthesized protein in an open conformation. Functions as a peptidyl-prolyl cis-trans isomerase. The chain is Trigger factor from Chlorobium limicola (strain DSM 245 / NBRC 103803 / 6330).